The chain runs to 282 residues: Phosphate import ATP-binding protein PstB (282 aa).

Over residues 1–10 (MNMAESHLDP) the composition is skewed to basic and acidic residues. A disordered region spans residues 1-24 (MNMAESHLDPSKLATGPAGAGAAT). Over residues 14–24 (ATGPAGAGAAT) the composition is skewed to low complexity. In terms of domain architecture, ABC transporter spans 36 to 277 (IEVKNLNFFY…PARKETEDYI (242 aa)). Residue 68-75 (GPSGCGKS) coordinates ATP.

The protein belongs to the ABC transporter superfamily. Phosphate importer (TC 3.A.1.7) family. The complex is composed of two ATP-binding proteins (PstB), two transmembrane proteins (PstC and PstA) and a solute-binding protein (PstS).

The protein resides in the cell inner membrane. It carries out the reaction phosphate(out) + ATP + H2O = ADP + 2 phosphate(in) + H(+). In terms of biological role, part of the ABC transporter complex PstSACB involved in phosphate import. Responsible for energy coupling to the transport system. The chain is Phosphate import ATP-binding protein PstB from Burkholderia thailandensis (strain ATCC 700388 / DSM 13276 / CCUG 48851 / CIP 106301 / E264).